The chain runs to 619 residues: Mitogen-activated protein kinase kinase kinase 2 (619 aa).

Disordered stretches follow at residues 25 to 44 (LSLQ…QNDV), 126 to 168 (QATN…PPPG), 201 to 245 (LDPL…DNHQ), and 289 to 355 (RTQG…APTN). A Phosphoserine modification is found at S26. The region spanning 43–122 (DVRVKFEHRG…KSLKILLVVN (80 aa)) is the PB1 domain. Over residues 126-143 (QATNLEPSPSPEDLNNTP) the composition is skewed to polar residues. S153 and S164 each carry phosphoserine. Over residues 203–219 (PLSLSSPENSGSGSCPS) the composition is skewed to low complexity. Phosphoserine is present on residues S239, S297, S311, S331, S344, and S349. The segment covering 290–299 (TQGTSFRSPV) has biased composition (polar residues). The segment covering 300-315 (SFSPTDHSLSTSSGSS) has biased composition (low complexity). The span at 322–332 (DDSRIRRRGSD) shows a compositional bias: basic and acidic residues. Polar residues predominate over residues 336 to 346 (PTLTVTDISPP). The region spanning 356-616 (WRLGKLLGQG…AEELLRHMFV (261 aa)) is the Protein kinase domain. Residues 362 to 370 (LGQGAFGRV) and K385 each bind ATP. The Proton acceptor role is filled by D483.

It belongs to the protein kinase superfamily. STE Ser/Thr protein kinase family. MAP kinase kinase kinase subfamily. In terms of assembly, self-associates. Binds both upstream activators and downstream substrates in multimolecular complexes. Interacts (via the kinase catalytic domain) with STK38. Interacts with XIAP/BIRC4. Mg(2+) serves as cofactor. Ubiquitination by XIAP/BIRC4 does not lead to proteasomal degradation. In terms of processing, autophosphorylated.

It is found in the cytoplasm. Its subcellular location is the nucleus. It catalyses the reaction L-seryl-[protein] + ATP = O-phospho-L-seryl-[protein] + ADP + H(+). The enzyme catalyses L-threonyl-[protein] + ATP = O-phospho-L-threonyl-[protein] + ADP + H(+). Activated by phosphorylation on Thr-524. Interacts with PKN2; the interaction activates PKN2 kinase activity in a MAP3K2-independent kinase activity. Component of a protein kinase signal transduction cascade. Regulates the JNK and ERK5 pathways by phosphorylating and activating MAP2K5 and MAP2K7. Plays a role in caveolae kiss-and-run dynamics. The protein is Mitogen-activated protein kinase kinase kinase 2 (Map3k2) of Mus musculus (Mouse).